A 138-amino-acid chain; its full sequence is Holo-[acyl-carrier-protein] synthase (138 aa).

Mg(2+)-binding residues include Asp-8 and Glu-54.

It belongs to the P-Pant transferase superfamily. AcpS family. Mg(2+) serves as cofactor.

Its subcellular location is the cytoplasm. It catalyses the reaction apo-[ACP] + CoA = holo-[ACP] + adenosine 3',5'-bisphosphate + H(+). In terms of biological role, transfers the 4'-phosphopantetheine moiety from coenzyme A to a Ser of acyl-carrier-protein. This Roseiflexus sp. (strain RS-1) protein is Holo-[acyl-carrier-protein] synthase.